The sequence spans 196 residues: Dephospho-CoA kinase (196 aa).

Residues 6–196 (AIALTGGIGT…QVERFLKTLL (191 aa)) enclose the DPCK domain. 14–19 (GTGKST) serves as a coordination point for ATP.

It belongs to the CoaE family.

It localises to the cytoplasm. It catalyses the reaction 3'-dephospho-CoA + ATP = ADP + CoA + H(+). It functions in the pathway cofactor biosynthesis; coenzyme A biosynthesis; CoA from (R)-pantothenate: step 5/5. Catalyzes the phosphorylation of the 3'-hydroxyl group of dephosphocoenzyme A to form coenzyme A. The chain is Dephospho-CoA kinase from Helicobacter pylori (strain J99 / ATCC 700824) (Campylobacter pylori J99).